We begin with the raw amino-acid sequence, 120 residues long: Putative 15 kDa capsid protein (120 aa).

Its subcellular location is the virion. This is Putative 15 kDa capsid protein (P15) from Orgyia pseudotsugata (Douglas-fir tussock moth).